The following is a 463-amino-acid chain: Quinolone resistance protein NorB (463 aa).

14 consecutive transmembrane segments (helical) span residues 17 to 37 (IGIV…VNVV), 53 to 73 (IAVS…GGLA), 86 to 106 (IILN…LLLI), 107 to 127 (IGRL…LSII), 142 to 162 (YWSI…GAVA), 165 to 185 (LGWR…LFLI), 201 to 221 (FDIK…ILIT), 230 to 250 (SLLF…FIVL), 273 to 293 (TASN…NTFV), 299 to 319 (YSSL…LIMI), 334 to 354 (PMLI…LTFL), 357 to 377 (ILYV…LGIY), 403 to 423 (MASA…YAIV), and 435 to 455 (IALW…LLLV).

This sequence belongs to the major facilitator superfamily. TCR/Tet family.

The protein localises to the cell membrane. Multidrug efflux pump that acts independently of NorA and is one of the factors that confers resistance against diverse quinolones and chemical compounds. In Staphylococcus aureus (strain Mu3 / ATCC 700698), this protein is Quinolone resistance protein NorB (norB).